A 401-amino-acid chain; its full sequence is ATP phosphoribosyltransferase regulatory subunit (401 aa).

Residues 373 to 401 (PGQQGGAAAQGCDRRLQQDDGGGWVTRPL) form a disordered region. Residues 392 to 401 (DGGGWVTRPL) show a composition bias toward gly residues.

The protein belongs to the class-II aminoacyl-tRNA synthetase family. HisZ subfamily. Heteromultimer composed of HisG and HisZ subunits.

It localises to the cytoplasm. The protein operates within amino-acid biosynthesis; L-histidine biosynthesis; L-histidine from 5-phospho-alpha-D-ribose 1-diphosphate: step 1/9. In terms of biological role, required for the first step of histidine biosynthesis. May allow the feedback regulation of ATP phosphoribosyltransferase activity by histidine. In Alkalilimnicola ehrlichii (strain ATCC BAA-1101 / DSM 17681 / MLHE-1), this protein is ATP phosphoribosyltransferase regulatory subunit.